The following is a 445-amino-acid chain: Tyrosine--tRNA ligase, mitochondrial (445 aa).

Y33 lines the L-tyrosine pocket. D37 provides a ligand contact to ATP. The 'HIGH' region signature appears at 38–47; the sequence is PTAASLHVGN. 5 residues coordinate L-tyrosine: D77, Y184, Q188, D191, and Q210. A 'KMSKS' region motif is present at residues 245 to 249; that stretch reads KLGKS. K248 is a binding site for ATP. The 62-residue stretch at 384-445 folds into the S4 RNA-binding domain; that stretch reads QPFSRLLRTL…GKRTFVLDSL (62 aa).

It belongs to the class-I aminoacyl-tRNA synthetase family. Homodimer.

It is found in the mitochondrion matrix. It catalyses the reaction tRNA(Tyr) + L-tyrosine + ATP = L-tyrosyl-tRNA(Tyr) + AMP + diphosphate + H(+). Its function is as follows. Catalyzes the attachment of tyrosine to tRNA(Tyr) in a two-step reaction: tyrosine is first activated by ATP to form Tyr-AMP and then transferred to the acceptor end of tRNA(Tyr). The sequence is that of Tyrosine--tRNA ligase, mitochondrial from Schizosaccharomyces pombe (strain 972 / ATCC 24843) (Fission yeast).